A 511-amino-acid polypeptide reads, in one-letter code: GMP synthase [glutamine-hydrolyzing] (511 aa).

Residues 5-195 (DILVLDFGSQ…AKYACNCESV (191 aa)) form the Glutamine amidotransferase type-1 domain. The active-site Nucleophile is the Cys-82. Active-site residues include His-169 and Glu-171. The GMPS ATP-PPase domain maps to 196–386 (WNMGSFAKTQ…LGLSKEVVYR (191 aa)). 223 to 229 (SGGVDSS) is a binding site for ATP.

Homodimer.

It carries out the reaction XMP + L-glutamine + ATP + H2O = GMP + L-glutamate + AMP + diphosphate + 2 H(+). Its pathway is purine metabolism; GMP biosynthesis; GMP from XMP (L-Gln route): step 1/1. In terms of biological role, catalyzes the synthesis of GMP from XMP. This chain is GMP synthase [glutamine-hydrolyzing], found in Campylobacter jejuni subsp. jejuni serotype O:23/36 (strain 81-176).